Here is a 54-residue protein sequence, read N- to C-terminus: Large ribosomal subunit protein bL33A (54 aa).

Belongs to the bacterial ribosomal protein bL33 family.

The protein is Large ribosomal subunit protein bL33A of Mesoplasma florum (strain ATCC 33453 / NBRC 100688 / NCTC 11704 / L1) (Acholeplasma florum).